Reading from the N-terminus, the 691-residue chain is Protein phosphatase Slingshot homolog (691 aa).

One can recognise a DEK-C domain in the interval 236 to 291 (EETERIIKLKLRDILRESDLENITSKEVRSALEQHTLCALQDYKEFIDNEMIIILA). The region spanning 295–436 (RPSEIFPYLY…LQTYQGILGA (142 aa)) is the Tyrosine-protein phosphatase domain. Catalysis depends on cysteine 380, which acts as the Phosphocysteine intermediate. A coiled-coil region spans residues 532–580 (NEHVLSKEQIIQEEKKVMELEKGPEWVVKNNVLEEMKETEERELPNFEL). The tract at residues 585-620 (NQSRERDQETIKESSVITQGSSSLDEVFESSTPTRS) is disordered. Over residues 587–596 (SRERDQETIK) the composition is skewed to basic and acidic residues. Over residues 597 to 619 (ESSVITQGSSSLDEVFESSTPTR) the composition is skewed to polar residues.

Belongs to the protein-tyrosine phosphatase family. As to quaternary structure, interacts with actin and this stimulates phosphatase activity.

The protein resides in the cytoplasm. It localises to the cytoskeleton. The protein localises to the cleavage furrow. It is found in the midbody. It carries out the reaction O-phospho-L-tyrosyl-[protein] + H2O = L-tyrosyl-[protein] + phosphate. It catalyses the reaction O-phospho-L-seryl-[protein] + H2O = L-seryl-[protein] + phosphate. The enzyme catalyses O-phospho-L-threonyl-[protein] + H2O = L-threonyl-[protein] + phosphate. Its function is as follows. Protein phosphatase which regulates actin filament dynamics. Dephosphorylates and activates the actin binding/depolymerizing factor cofilin, which subsequently binds to actin filaments and stimulates their disassembly. Required for completion of the gastrulation movement and for cytokinesis. The protein is Protein phosphatase Slingshot homolog (ssh) of Xenopus laevis (African clawed frog).